The sequence spans 140 residues: Holo-[acyl-carrier-protein] synthase (140 aa).

Positions 7 and 58 each coordinate Mg(2+).

It belongs to the P-Pant transferase superfamily. AcpS family. Mg(2+) serves as cofactor.

It is found in the cytoplasm. The enzyme catalyses apo-[ACP] + CoA = holo-[ACP] + adenosine 3',5'-bisphosphate + H(+). In terms of biological role, transfers the 4'-phosphopantetheine moiety from coenzyme A to a Ser of acyl-carrier-protein. The sequence is that of Holo-[acyl-carrier-protein] synthase from Chloroflexus aggregans (strain MD-66 / DSM 9485).